We begin with the raw amino-acid sequence, 192 residues long: uncharacterized protein (192 aa).

This is an uncharacterized protein from Acidianus convivator (ATV).